The sequence spans 403 residues: Large ribosomal subunit protein uL3 (403 aa).

The segment at 1 to 37 (MSHRKFSAPRHGSLGFLPRKRSSRHRGKVKSFPKDDP) is disordered. Phosphoserine is present on Ser13. Residues 18–31 (PRKRSSRHRGKVKS) are compositionally biased toward basic residues. Lys39 is covalently cross-linked (Glycyl lysine isopeptide (Lys-Gly) (interchain with G-Cter in SUMO2)). Lys136 carries the N6-acetyllysine modification. Glycyl lysine isopeptide (Lys-Gly) (interchain with G-Cter in SUMO2) cross-links involve residues Lys224 and Lys226. His245 is subject to Tele-methylhistidine. N6-acetyllysine; alternate occurs at positions 286 and 294. Lys286 participates in a covalent cross-link: Glycyl lysine isopeptide (Lys-Gly) (interchain with G-Cter in SUMO2); alternate. A Glycyl lysine isopeptide (Lys-Gly) (interchain with G-Cter in SUMO1); alternate cross-link involves residue Lys294. A Phosphoserine modification is found at Ser304. An N6-acetyllysine; alternate modification is found at Lys366. Residue Lys366 forms a Glycyl lysine isopeptide (Lys-Gly) (interchain with G-Cter in SUMO2); alternate linkage. Lys373 is modified (N6-acetyllysine). Residues Lys386, Lys393, and Lys399 each participate in a glycyl lysine isopeptide (Lys-Gly) (interchain with G-Cter in SUMO2) cross-link.

Belongs to the universal ribosomal protein uL3 family. As to quaternary structure, component of the large ribosomal subunit. Interacts with DHX33. Post-translationally, constitutively monomethylated at His-245 by METTL18. Methylation at His-245 regulates translation elongation by slowing ribosome traversal on tyrosine codons: slower elongation provides enough time for proper folding of synthesized proteins and prevents cellular aggregation of tyrosine-rich proteins. It is not required for incorporation of RPL3 into ribosomes.

It localises to the nucleus. Its subcellular location is the nucleolus. The protein localises to the cytoplasm. In terms of biological role, component of the large ribosomal subunit. The ribosome is a large ribonucleoprotein complex responsible for the synthesis of proteins in the cell. This is Large ribosomal subunit protein uL3 (RPL3) from Homo sapiens (Human).